Reading from the N-terminus, the 467-residue chain is Glutamate--tRNA ligase (467 aa).

The 'HIGH' region signature appears at 9-19; it reads PSPTGYLHIGG. The 'KMSKS' region signature appears at 237–241; that stretch reads KLSKR. Residue K240 coordinates ATP.

It belongs to the class-I aminoacyl-tRNA synthetase family. Glutamate--tRNA ligase type 1 subfamily. In terms of assembly, monomer.

The protein resides in the cytoplasm. It catalyses the reaction tRNA(Glu) + L-glutamate + ATP = L-glutamyl-tRNA(Glu) + AMP + diphosphate. Its function is as follows. Catalyzes the attachment of glutamate to tRNA(Glu) in a two-step reaction: glutamate is first activated by ATP to form Glu-AMP and then transferred to the acceptor end of tRNA(Glu). The protein is Glutamate--tRNA ligase of Xanthomonas campestris pv. campestris (strain B100).